We begin with the raw amino-acid sequence, 388 residues long: L-lactate dehydrogenase (388 aa).

Residues 1 to 380 (MIISSSSDYR…SRDSLVREIE (380 aa)) form the FMN hydroxy acid dehydrogenase domain. Tyr24 contributes to the substrate binding site. Positions 106 and 127 each coordinate FMN. Tyr129 lines the substrate pocket. Residue Thr155 coordinates FMN. Residue Arg164 coordinates substrate. Lys251 lines the FMN pocket. His275 functions as the Proton acceptor in the catalytic mechanism. Arg278 provides a ligand contact to substrate. 306–330 (DSGIRSGLDVVRMLAQGADGVLLGR) serves as a coordination point for FMN.

It belongs to the FMN-dependent alpha-hydroxy acid dehydrogenase family. FMN is required as a cofactor.

Its subcellular location is the cell inner membrane. The catalysed reaction is (S)-lactate + A = pyruvate + AH2. Catalyzes the conversion of L-lactate to pyruvate. Is coupled to the respiratory chain. The chain is L-lactate dehydrogenase from Xanthobacter autotrophicus (strain ATCC BAA-1158 / Py2).